Here is a 548-residue protein sequence, read N- to C-terminus: Chaperonin GroEL (548 aa).

Residues 30 to 33 (TLGP), K51, 87 to 91 (DGTTT), G415, 479 to 481 (NAA), and D495 each bind ATP.

Belongs to the chaperonin (HSP60) family. As to quaternary structure, forms a cylinder of 14 subunits composed of two heptameric rings stacked back-to-back. Interacts with the co-chaperonin GroES.

The protein localises to the cytoplasm. It carries out the reaction ATP + H2O + a folded polypeptide = ADP + phosphate + an unfolded polypeptide.. Functionally, together with its co-chaperonin GroES, plays an essential role in assisting protein folding. The GroEL-GroES system forms a nano-cage that allows encapsulation of the non-native substrate proteins and provides a physical environment optimized to promote and accelerate protein folding. This is Chaperonin GroEL from Salmonella arizonae (strain ATCC BAA-731 / CDC346-86 / RSK2980).